A 311-amino-acid chain; its full sequence is CID domain-containing protein 1 (311 aa).

Residues 1-134 (MSDFTEQTLR…RLQEAHQQMK (134 aa)) enclose the CID domain. Positions 224 to 256 (MLEDYVKRLKEETKERESLETNLNMLIQNVRMS) form a coiled coil.

In Caenorhabditis briggsae, this protein is CID domain-containing protein 1 (cids-1).